The following is a 514-amino-acid chain: Peptide chain release factor 3 (514 aa).

Residues Lys-8–His-268 form the tr-type G domain. Residues Ser-17–Thr-24, Asp-85–His-89, and Asn-139–Asp-142 contribute to the GTP site.

It belongs to the TRAFAC class translation factor GTPase superfamily. Classic translation factor GTPase family. PrfC subfamily.

Its subcellular location is the cytoplasm. In terms of biological role, increases the formation of ribosomal termination complexes and stimulates activities of RF-1 and RF-2. It binds guanine nucleotides and has strong preference for UGA stop codons. It may interact directly with the ribosome. The stimulation of RF-1 and RF-2 is significantly reduced by GTP and GDP, but not by GMP. In Streptococcus pneumoniae serotype 2 (strain D39 / NCTC 7466), this protein is Peptide chain release factor 3.